A 406-amino-acid polypeptide reads, in one-letter code: E3 ubiquitin-protein ligase RING1 (406 aa).

At threonine 24 the chain carries Phosphothreonine. Residues 30-234 (MDGTEIAVSP…GGAGSEDSGD (205 aa)) are necessary for transcriptional repression. At serine 38 the chain carries Phosphoserine. The segment at 48–88 (CPICLDMLKNTMTTKECLHRFCSDCIVTALRSGNKECPTCR) adopts an RING-type zinc-finger fold. Phosphoserine is present on residues serine 140, serine 187, and serine 190. Disordered stretches follow at residues 151 to 263 (HRAQ…GEIE) and 309 to 354 (QQQE…PSLE). Residues 175–187 (EPGEGEGDGEDIS) show a composition bias toward acidic residues. Residues 201 to 204 (KRPR) carry the Nuclear localization signal motif. Gly residues predominate over residues 205–228 (GGGAGGSSVGTGGGAAGGACGGAG). A Phosphothreonine modification is found at threonine 215. Serine 229 and serine 232 each carry phosphoserine. Residues 230–406 (EDSGDRGGTL…LCYAPTKDPK (177 aa)) form a necessary for interaction with CBX2 region. The segment covering 235 to 244 (RGGTLGGGTL) has biased composition (gly residues). A compositionally biased stretch (pro residues) spans 246 to 258 (PPSPPGAPSPPEP). Serine 248 and serine 254 each carry phosphoserine. The span at 317–343 (GGPGGGASDTGGPDGGGGERGVSGGGE) shows a compositional bias: gly residues.

In terms of assembly, component of chromatin-associated Polycomb (PcG) complexes. Part of the E2F6.com-1 complex in G0 phase composed of E2F6, MGA, MAX, TFDP1, CBX3, BAT8, EUHMTASE1, RING1, RNF2/RING2 MBLR, L3MBTL2 and YAF2. Interacts with CBX2 and PCGF6. Component of a PRC1-like complex. Component of repressive BCOR complex containing Polycomb group subcomplex at least composed of RYBP, PCGF1, BCOR and RNF2/RING2. Interacts with BMI1, PHC2, PCGF2, RNF2; CBX6, CBX7 and CBX8. Interacts with MN1. Interacts with USP26.

The protein localises to the nucleus speckle. The catalysed reaction is S-ubiquitinyl-[E2 ubiquitin-conjugating enzyme]-L-cysteine + [acceptor protein]-L-lysine = [E2 ubiquitin-conjugating enzyme]-L-cysteine + N(6)-ubiquitinyl-[acceptor protein]-L-lysine.. The protein operates within protein modification; protein ubiquitination. Constitutes one of the E3 ubiquitin-protein ligases that mediate monoubiquitination of 'Lys-119' of histone H2A, thereby playing a central role in histone code and gene regulation. H2A 'Lys-119' ubiquitination gives a specific tag for epigenetic transcriptional repression and participates in X chromosome inactivation of female mammals. Essential component of a Polycomb group (PcG) multiprotein PRC1-like complex, a complex class required to maintain the transcriptionally repressive state of many genes, including Hox genes, throughout development. PcG PRC1 complex acts via chromatin remodeling and modification of histones, rendering chromatin heritably changed in its expressibility. Compared to RNF2/RING2, it does not have the main E3 ubiquitin ligase activity on histone H2A, and it may rather act as a modulator of RNF2/RING2 activity. The polypeptide is E3 ubiquitin-protein ligase RING1 (Rattus norvegicus (Rat)).